We begin with the raw amino-acid sequence, 2098 residues long: Unconventional myosin heavy chain 6 (2098 aa).

The region spanning 62-732 (QGVEDMCQLG…HDLVLEQEYY (671 aa)) is the Myosin motor domain. 155–162 (GESGAGKT) provides a ligand contact to ATP. Actin-binding regions lie at residues 609–631 (LEQL…KPNE) and 711–725 (QLGK…KHDL). IQ domains are found at residues 735–757 (LKDK…DFEK), 758–787 (QRQA…GFSR), and 804–833 (LRKT…RGEK). The interval 860–898 (FLPSDGKDSGNENDSADSSRRGSYSRLHTSPVMPPANIP) is disordered. One can recognise a MyTH4 1 domain in the interval 929–1168 (HVKKPLKTAL…PSYVELQANK (240 aa)). In terms of domain architecture, Ras-associating spans 1171–1211 (KPVVLAVTFMDGSVKTLCADSATTAAELCKQLAEKVGLTNS). Residues 1173–1481 (VVLAVTFMDG…MFLEGLKKRS (309 aa)) form the FERM 1 domain. The 69-residue stretch at 1479–1547 (KRSRYLVAIK…RAENVYVLPT (69 aa)) folds into the SH3 domain. The MyTH4 2 domain maps to 1624–1772 (FSREHIDQPL…PHLVEVEAIQ (149 aa)). In terms of domain architecture, FERM 2 spans 1778-2086 (IFHKVFFPDN…SYISLLISNQ (309 aa)).

It belongs to the TRAFAC class myosin-kinesin ATPase superfamily. Myosin family. In terms of assembly, interacts with unc-98.

It localises to the cytoplasm. Its function is as follows. Myosins are actin-based motor molecules with ATPase activity. Unconventional myosins serve in intracellular movements. Their highly divergent tails are presumed to bind to membranous compartments, which would be moved relative to actin filaments. The chain is Unconventional myosin heavy chain 6 from Caenorhabditis elegans.